The primary structure comprises 710 residues: Putative membrane protein IgaA homolog (710 aa).

Residue Met1 is a topological domain, periplasmic. A helical membrane pass occupies residues 2-22; sequence STILIFIAALLACSLLAIWRF. Residues 23 to 204 are Cytoplasmic-facing; the sequence is RVKSRRGSLP…YALSRPAGLR (182 aa). Helical transmembrane passes span 205–225 and 226–246; these read EALL…TPDV and FVPW…WGLF. Over 247–339 the chain is Cytoplasmic; the sequence is APPSKSALRE…KNFPLQHWLR (93 aa). Residues 340-360 form a helical membrane-spanning segment; sequence STVIAIGSLLVLFMLLFWIPL. Residues 361–656 lie on the Periplasmic side of the membrane; it reads DMPIKFTLSW…PDKSGWWRYL (296 aa). The helical transmembrane segment at 657–677 threads the bilayer; it reads GTTLLMLAMIVSAVYNGIQAF. The Cytoplasmic portion of the chain corresponds to 678–710; it reads RRYQRHRTRMADIQEYYESCLNPRLTVSPENLI.

It belongs to the IgaA family.

The protein resides in the cell inner membrane. This chain is Putative membrane protein IgaA homolog (yrfF), found in Salmonella typhi.